The chain runs to 1134 residues: Spermatogenesis-associated protein 31C2 (1134 aa).

Residues 23–43 form a helical membrane-spanning segment; the sequence is PWVLDIFLTLVFALGFFFLLL. Disordered stretches follow at residues 54-87, 115-243, 477-504, 524-561, 727-807, 928-1007, and 1111-1134; these read PPSP…NHSL, LEKG…LLTP, PGTS…EAQT, TPQN…DSGS, MPER…PTVP, NMGH…PSIS, and AASS…IRDQ. Basic residues predominate over residues 59 to 87; that stretch reads PKKRKRHLVSQRPAGRRGRPRGRMKNHSL. Residues 132 to 148 are compositionally biased toward basic and acidic residues; that stretch reads VGKRTPDGASRSSHEPT. Low complexity predominate over residues 185-201; that stretch reads SSLSASQPPEPSLLLEH. Residues 204–235 are compositionally biased toward pro residues; sequence PEPPALFPHPPRTPDPLACSPPPPKGFTPPPL. Residues 489–504 show a composition bias toward polar residues; sequence WQSSTSTGESSKEAQT. Polar residues-rich tracts occupy residues 773–794 and 937–948; these read LTYS…SSRA and PNCQGSCKSQSP. A compositionally biased stretch (basic and acidic residues) spans 954-970; the sequence is HKRENSRKPNLEKHEEM. Positions 1111–1124 are enriched in polar residues; it reads AASSQQATLKNQSR. Basic and acidic residues predominate over residues 1125–1134; sequence PNRDRQIRDQ.

This sequence belongs to the SPATA31 family.

Its subcellular location is the membrane. In terms of biological role, may play a role in spermatogenesis. This is Spermatogenesis-associated protein 31C2 (SPATA31C2) from Homo sapiens (Human).